Consider the following 416-residue polypeptide: MGDWSFLGRLLENAQEHSTVIGKVWLTVLFIFRILVLGAAAEEVWGDEQSDFTCNTQQPGCENVCYDRAFPISHIRFWALQIIFVSTPTLIYLGHVLHIVRMEEKKKEREEELLRRDNPQHGRGREPMRTGSPRDPPLRDDRGKVRIAGALLRTYVFNIIFKTLFEVGFIAGQYFLYGFQLQPLYRCDRWPCPNTVDCFISRPTEKTIFVIFMLAVACASLVLNMLEIYHLGWKKLKQGVTNHFNPDASEVRHKPLDPLSEAANSGPPSVSIGLPPYYTHPACPTVQGKATGFPGAPLLPADFTVVTLNDAQGRGHPVKHCNGHHLTTEQNWASLGAEPQTPASKPSSAASSPHGRKGLTDSSGSSLEESALVVTPEGEQALATTVEMHSPPLVLLDPERSSKSSSGRARPGDLAI.

An intramembrane segment occupies Gly2–Gln15. Over Glu16 to Thr19 the chain is Cytoplasmic. A helical transmembrane segment spans residues Val20–Ala40. The Extracellular segment spans residues Ala41–Pro71. 3 cysteine pairs are disulfide-bonded: Cys54/Cys198, Cys61/Cys192, and Cys65/Cys187. The helical transmembrane segment at Ile72–Tyr92 threads the bilayer. Over Leu93 to Asn158 the chain is Cytoplasmic. Over residues Glu110–Met128 the composition is skewed to basic and acidic residues. Positions Glu110 to Asp141 are disordered. A helical transmembrane segment spans residues Ile159–Phe179. Residues Gln180 to Thr207 lie on the Extracellular side of the membrane. Residues Ile208–Ile228 form a helical membrane-spanning segment. Topologically, residues Tyr229–Ile416 are cytoplasmic. The segment at Gly336–Ile416 is disordered. The segment covering Pro342 to Pro353 has biased composition (low complexity).

Belongs to the connexin family. Alpha-type (group II) subfamily. As to quaternary structure, a hemichannel or connexon is composed of a hexamer of connexins. A functional gap junction is formed by the apposition of two hemichannels. Forms heteromeric channels with GJA8. Detected in eye lens (at protein level). Most abundant in lens, but also present in heart and kidney.

The protein resides in the cell membrane. It is found in the cell junction. Its subcellular location is the gap junction. In terms of biological role, structural component of lens fiber gap junctions. Gap junctions are dodecameric channels that connect the cytoplasm of adjoining cells. They are formed by the docking of two hexameric hemichannels, one from each cell membrane. Small molecules and ions diffuse from one cell to a neighboring cell via the central pore. The chain is Gap junction alpha-3 protein (Gja3) from Rattus norvegicus (Rat).